A 182-amino-acid chain; its full sequence is ADP-ribosylation factor 1 (182 aa).

Gly2 carries the N-myristoyl glycine lipid modification. GTP-binding positions include 24–31 (GLDAAGKT), 67–71 (DVGGQ), and 126–129 (NKQD).

It belongs to the small GTPase superfamily. Arf family.

It localises to the golgi apparatus. The enzyme catalyses GTP + H2O = GDP + phosphate + H(+). Functionally, GTP-binding protein involved in protein trafficking; may modulate vesicle budding and uncoating within the Golgi apparatus. The sequence is that of ADP-ribosylation factor 1 (arfA) from Dictyostelium discoideum (Social amoeba).